The primary structure comprises 383 residues: Na(+)/H(+) antiporter NhaA (383 aa).

The next 11 helical transmembrane spans lie at 19–39 (AGGV…NSPL), 56–76 (VLHG…GLEI), 92–112 (ILPG…FLAL), 122–142 (GWAV…ALLG), 151–171 (IFLT…IALF), 174–194 (AKLS…LAAL), 212–232 (LWGA…ALAL), 255–275 (VGYG…FAGL), 292–312 (LLFG…WLGF), 326–346 (GVAV…ALAF), and 356–376 (VKVG…LVLL).

It belongs to the NhaA Na(+)/H(+) (TC 2.A.33) antiporter family.

It localises to the cell inner membrane. The catalysed reaction is Na(+)(in) + 2 H(+)(out) = Na(+)(out) + 2 H(+)(in). Its function is as follows. Na(+)/H(+) antiporter that extrudes sodium in exchange for external protons. The polypeptide is Na(+)/H(+) antiporter NhaA (Paramagnetospirillum magneticum (strain ATCC 700264 / AMB-1) (Magnetospirillum magneticum)).